The primary structure comprises 427 residues: Glutamyl-tRNA reductase (427 aa).

Substrate-binding positions include 49–52, Ser-105, 110–112, and Gln-116; these read TCNR and EPQ. The active-site Nucleophile is Cys-50. 185–190 contacts NADP(+); the sequence is AAGEMN.

Belongs to the glutamyl-tRNA reductase family. Homodimer.

The enzyme catalyses (S)-4-amino-5-oxopentanoate + tRNA(Glu) + NADP(+) = L-glutamyl-tRNA(Glu) + NADPH + H(+). Its pathway is porphyrin-containing compound metabolism; protoporphyrin-IX biosynthesis; 5-aminolevulinate from L-glutamyl-tRNA(Glu): step 1/2. Catalyzes the NADPH-dependent reduction of glutamyl-tRNA(Glu) to glutamate 1-semialdehyde (GSA). This is Glutamyl-tRNA reductase from Acinetobacter baumannii (strain AB307-0294).